Reading from the N-terminus, the 824-residue chain is C-Jun-amino-terminal kinase-interacting protein 2 (824 aa).

4 disordered regions span residues 1-28, 40-160, 172-349, and 361-501; these read MADR…QDIS, ITDD…GFDL, CSPA…DSPW, and EGSS…APRD. Acidic residues predominate over residues 77 to 110; the sequence is DFQEFEMIDDNEEEDDEDEEEEEEEEEGDGEGQE. The segment at 110–275 is JNK-binding domain (JBD); it reads EGGDPGSEAP…RMISSISETE (166 aa). Positions 141–156 are enriched in polar residues; it reads LRLTTLGAQDSLNNNG. Residues 239–498 form a necessary for interaction with FGF13 region; that stretch reads GRGGRRSSQE…PGGRGTGPSA (260 aa). 3 positions are modified to phosphoserine: Ser-254, Ser-302, and Ser-305. Residues 268 to 305 are compositionally biased toward low complexity; that stretch reads ISSISETELELSSDGGSSSSGRSSHLTNSIEEASSPAS. The span at 327–346 shows a compositional bias: acidic residues; sequence TNSEYESGSESEPDLSEDAD. Residues 416–432 show a composition bias toward pro residues; the sequence is APPPPAPAAPRPGPAQP. The segment covering 451–467 has biased composition (low complexity); that stretch reads AAPGRAARPGRACSAAC. Residues 468 to 484 show a composition bias toward acidic residues; the sequence is SEEEDEEDDEEEEDAED. In terms of domain architecture, SH3 spans 604-665; it reads EREQTHRAVF…PAFYAHAVPG (62 aa). The 137-residue stretch at 677–813 folds into the PID domain; the sequence is PCWVERFDVQ…FLEYYQEHLA (137 aa).

Belongs to the JIP scaffold family. In terms of assembly, forms homo- or heterooligomeric complexes. Binds specific components of the JNK signaling pathway namely JNK1, JNK2, JNK3, MAP2K7, MAP3K10, MAP3K11, MAP3K12 and MAPK13. Also binds the proline-rich domain-containing splice variant of apolipoprotein E receptor 2 (ApoER2). Binds the cytoplasmic tails of LRP1 and LRP2 (Megalin). Binds the TPR motif-containing C-terminal of kinesin light chain, Klc1, pre-assembled MAPK8IP1 scaffolding complexes are then transported as a cargo of kinesin, to the required subcellular location. Interacts with the cytoplasmic domain of APP. Interacts with DCLK2. Interacts with TIAM1 and TIAM2. Interacts with FGF13; enables the interaction with MAPK13 and may regulate the MAPK8IP2 scaffolding activity. Interacts with SH3RF2. In terms of tissue distribution, expressed mainly in the brain and pancreas, including insulin-secreting cells. In the nervous system, more abundantly expressed in the cerebellum, pituitary gland, occipital lobe and the amygdala. Also expressed in fetal brain. Very low levels found in uterus, ovary, prostate, colon, testis, adrenal gland, thyroid gland and salivary gland.

The protein resides in the cytoplasm. Its function is as follows. The JNK-interacting protein (JIP) group of scaffold proteins selectively mediates JNK signaling by aggregating specific components of the MAPK cascade to form a functional JNK signaling module. JIP2 inhibits IL1 beta-induced apoptosis in insulin-secreting cells. May function as a regulator of vesicle transport, through interactions with the JNK-signaling components and motor proteins. This chain is C-Jun-amino-terminal kinase-interacting protein 2 (MAPK8IP2), found in Homo sapiens (Human).